The chain runs to 236 residues: GLIPR1-like protein 1 (236 aa).

The signal sequence occupies residues 1 to 27; the sequence is MALKKKLNFLWTLVLYLIASRLPKAFG. One can recognise an SCP domain in the interval 46–178; sequence LNIHNELRRK…FSAGLFVCNY (133 aa). An N-linked (GlcNAc...) asparagine glycan is attached at N126.

It belongs to the CRISP family. As to quaternary structure, part of a oolemmal binding multimeric complex (IZUMO1 complex) composed at least of IZUMO1 and GLIPR1L1; the complex assemblage is influenced by the maturation status of the male germ cell. Interacts with IZUMO1. In terms of processing, N-glycosylated. N-glycosylation decreases during the transit in the caput. Expressed in testis (at protein level). Little or no expression in other tissues tested.

Its subcellular location is the cytoplasmic vesicle. The protein resides in the secretory vesicle. It is found in the acrosome. The protein localises to the cell membrane. It localises to the membrane raft. Its subcellular location is the secreted. Required for optimal fertilization at the stage of sperm-oocyte fusion, plays a role in optimizing acrosome function, the translocation of IZUMO1 during the acrosome reaction and the fertilization process. Component of epididymosomes, one type of membranous microvesicules which mediate the transfer of lipids and proteins to spermatozoa plasma membrane during epididymal maturation. Also component of the CD9-positive microvesicules found in the cauda region. The polypeptide is GLIPR1-like protein 1 (Mus musculus (Mouse)).